Consider the following 1379-residue polypeptide: DNA-directed RNA polymerase subunit beta (1379 aa).

Belongs to the RNA polymerase beta chain family. As to quaternary structure, the RNAP catalytic core consists of 2 alpha, 1 beta, 1 beta' and 1 omega subunit. When a sigma factor is associated with the core the holoenzyme is formed, which can initiate transcription.

It carries out the reaction RNA(n) + a ribonucleoside 5'-triphosphate = RNA(n+1) + diphosphate. Its function is as follows. DNA-dependent RNA polymerase catalyzes the transcription of DNA into RNA using the four ribonucleoside triphosphates as substrates. The polypeptide is DNA-directed RNA polymerase subunit beta (Rhizobium johnstonii (strain DSM 114642 / LMG 32736 / 3841) (Rhizobium leguminosarum bv. viciae)).